The primary structure comprises 320 residues: UDP-3-O-acyl-N-acetylglucosamine deacetylase (320 aa).

Residues H92, H251, and D255 each coordinate Zn(2+). The Proton donor role is filled by H278.

Belongs to the LpxC family. It depends on Zn(2+) as a cofactor.

The catalysed reaction is a UDP-3-O-[(3R)-3-hydroxyacyl]-N-acetyl-alpha-D-glucosamine + H2O = a UDP-3-O-[(3R)-3-hydroxyacyl]-alpha-D-glucosamine + acetate. The protein operates within glycolipid biosynthesis; lipid IV(A) biosynthesis; lipid IV(A) from (3R)-3-hydroxytetradecanoyl-[acyl-carrier-protein] and UDP-N-acetyl-alpha-D-glucosamine: step 2/6. In terms of biological role, catalyzes the hydrolysis of UDP-3-O-myristoyl-N-acetylglucosamine to form UDP-3-O-myristoylglucosamine and acetate, the committed step in lipid A biosynthesis. In Psychrobacter cryohalolentis (strain ATCC BAA-1226 / DSM 17306 / VKM B-2378 / K5), this protein is UDP-3-O-acyl-N-acetylglucosamine deacetylase.